The sequence spans 123 residues: Small ribosomal subunit protein uS13 (123 aa).

A disordered region spans residues 97–123; it reads PVRGQRTHTNAKTRKGRSRLPVAAKKK.

It belongs to the universal ribosomal protein uS13 family. As to quaternary structure, part of the 30S ribosomal subunit. Forms a loose heterodimer with protein S19. Forms two bridges to the 50S subunit in the 70S ribosome.

Its function is as follows. Located at the top of the head of the 30S subunit, it contacts several helices of the 16S rRNA. In the 70S ribosome it contacts the 23S rRNA (bridge B1a) and protein L5 of the 50S subunit (bridge B1b), connecting the 2 subunits; these bridges are implicated in subunit movement. Contacts the tRNAs in the A and P-sites. The sequence is that of Small ribosomal subunit protein uS13 from Ehrlichia ruminantium (strain Gardel).